A 371-amino-acid chain; its full sequence is Maltose/maltodextrin import ATP-binding protein MalK (371 aa).

Residues 4–234 (VQLQNVTKAW…PADRFVAGFI (231 aa)) form the ABC transporter domain. 36-43 (GPSGCGKS) contacts ATP.

Belongs to the ABC transporter superfamily. Maltooligosaccharide importer (TC 3.A.1.1.1) family. The complex is composed of two ATP-binding proteins (MalK), two transmembrane proteins (MalG and MalK) and a solute-binding protein (MalE).

Its subcellular location is the cell inner membrane. It carries out the reaction D-maltose(out) + ATP + H2O = D-maltose(in) + ADP + phosphate + H(+). In terms of biological role, part of the ABC transporter complex MalEFGK involved in maltose/maltodextrin import. Responsible for energy coupling to the transport system. The protein is Maltose/maltodextrin import ATP-binding protein MalK of Escherichia coli O6:K15:H31 (strain 536 / UPEC).